Consider the following 118-residue polypeptide: Autophagy-related protein 8D (118 aa).

Gly118 is lipidated: Phosphatidylethanolamine amidated glycine.

Belongs to the ATG8 family. Interacts with ATG4. The C-terminal Gly is amidated with phosphatidylethanolamine by an activating system similar to that for ubiquitin.

It is found in the cytoplasmic vesicle. The protein resides in the autophagosome membrane. The protein localises to the vacuole membrane. Its subcellular location is the cytoplasm. It localises to the cytoskeleton. In terms of biological role, ubiquitin-like modifier involved in autophagosomes formation. May mediate the delivery of the autophagosomes to the vacuole via the microtubule cytoskeleton. This chain is Autophagy-related protein 8D (ATG8D), found in Oryza sativa subsp. japonica (Rice).